Here is a 207-residue protein sequence, read N- to C-terminus: Large ribosomal subunit protein uL3c (207 aa).

Residues 128–148 form a disordered region; sequence FTRGPMTHGSKNHRAPGSIGM.

It belongs to the universal ribosomal protein uL3 family. As to quaternary structure, part of the 50S ribosomal subunit.

The protein localises to the plastid. Its subcellular location is the chloroplast. Its function is as follows. One of the primary rRNA binding proteins, it binds directly near the 3'-end of the 23S rRNA, where it nucleates assembly of the 50S subunit. In Trieres chinensis (Marine centric diatom), this protein is Large ribosomal subunit protein uL3c (rpl3).